The primary structure comprises 483 residues: Probable apyrase 3 (483 aa).

At 1 to 29 the chain is on the cytoplasmic side; sequence MTPETDALKVQILPKHQSLPYTVTKAKSK. A helical; Signal-anchor for type II membrane protein membrane pass occupies residues 30–50; the sequence is SLILLVVVSVTITLGLLLYVF. The Extracellular segment spans residues 51 to 483; that stretch reads NSNSVISSGS…NGKSRKYLGF (433 aa). 72-82 provides a ligand contact to ATP; sequence VLIDAGSSGTR. E195 acts as the Proton acceptor in catalysis. Residue 219–229 participates in ATP binding; the sequence is GIVELGGASAQ. Residues N250, N281, N305, and N326 are each glycosylated (N-linked (GlcNAc...) asparagine).

This sequence belongs to the GDA1/CD39 NTPase family. It depends on Ca(2+) as a cofactor. As to expression, expressed in the initiation zone of lateral root and in the lateral root tip, the adaxial junction of lateral shoots with the stems, and in the abscission zone of flower organs. Not expressed in the rosette leaves.

The protein resides in the membrane. It catalyses the reaction a ribonucleoside 5'-triphosphate + 2 H2O = a ribonucleoside 5'-phosphate + 2 phosphate + 2 H(+). Functionally, catalyzes the hydrolysis of phosphoanhydride bonds of nucleoside tri- and di-phosphates. The protein is Probable apyrase 3 (APY3) of Arabidopsis thaliana (Mouse-ear cress).